The chain runs to 130 residues: Large ribosomal subunit protein bL12 (130 aa).

This sequence belongs to the bacterial ribosomal protein bL12 family. In terms of assembly, homodimer. Part of the ribosomal stalk of the 50S ribosomal subunit. Forms a multimeric L10(L12)X complex, where L10 forms an elongated spine to which 2 to 4 L12 dimers bind in a sequential fashion. Binds GTP-bound translation factors.

Functionally, forms part of the ribosomal stalk which helps the ribosome interact with GTP-bound translation factors. Is thus essential for accurate translation. This Nostoc punctiforme (strain ATCC 29133 / PCC 73102) protein is Large ribosomal subunit protein bL12.